A 329-amino-acid polypeptide reads, in one-letter code: BTB/POZ domain-containing protein At1g55760 (329 aa).

In terms of domain architecture, BTB spans 164 to 231; it reads TDITINASDG…IYGNIQNEDF (68 aa).

It participates in protein modification; protein ubiquitination. May act as a substrate-specific adapter of an E3 ubiquitin-protein ligase complex (CUL3-RBX1-BTB) which mediates the ubiquitination and subsequent proteasomal degradation of target proteins. The polypeptide is BTB/POZ domain-containing protein At1g55760 (Arabidopsis thaliana (Mouse-ear cress)).